Here is a 429-residue protein sequence, read N- to C-terminus: GDP-fucose protein O-fucosyltransferase 2 (429 aa).

The signal sequence occupies residues 1-21 (MATLSFVFLLLGAVSWPPASA). 53 to 57 (PEGFN) lines the GDP-beta-L-fucose pocket. Glutamate 54 functions as the Proton acceptor in the catalytic mechanism. Cysteine 161 and cysteine 192 are oxidised to a cystine. Residues asparagine 189, asparagine 209, and asparagine 259 are each glycosylated (N-linked (GlcNAc...) asparagine). GDP-beta-L-fucose-binding positions include 292-294 (HLR), aspartate 371, and 388-389 (TF). The cysteines at positions 412 and 419 are disulfide-linked.

This sequence belongs to the glycosyltransferase 68 family. As to expression, isoform A is expressed in fetal liver and peripheral blood lymphocytes. Isoform B is expressed in spleen, lung, testis, bone marrow, thymus, pancreas, prostate, fetal brain, fetal liver and fetal kidney. Isoform C is expressed in brain, heart, spleen, liver, lung, stomach, testis, placenta, skin, thymus, pancreas, mammary gland, prostate, fetal brain, fetal liver and fetal heart.

It localises to the endoplasmic reticulum. Its subcellular location is the golgi apparatus. It catalyses the reaction L-seryl-[protein] + GDP-beta-L-fucose = 3-O-(alpha-L-fucosyl)-L-seryl-[protein] + GDP + H(+). It carries out the reaction L-threonyl-[protein] + GDP-beta-L-fucose = 3-O-(alpha-L-fucosyl)-L-threonyl-[protein] + GDP + H(+). Its pathway is protein modification; protein glycosylation. Its activity is regulated as follows. Inhibited by EDTA and by Zn(2+). Its function is as follows. Catalyzes the reaction that attaches fucose through an O-glycosidic linkage to a conserved serine or threonine residue in the consensus sequence C1-X-X-S/T-C2 of thrombospondin type I repeats (TSRs) where C1 and C2 are the first and second cysteines of the repeat, respectively. O-fucosylates members of several protein families including the ADAMTS, the thrombospondin (TSP) and spondin families. Required for the proper secretion of ADAMTS family members such as ADAMTSL1 and ADAMTS13. The O-fucosylation of TSRs is also required for restricting epithelial to mesenchymal transition (EMT), maintaining the correct patterning of mesoderm and localization of the definite endoderm. The protein is GDP-fucose protein O-fucosyltransferase 2 (POFUT2) of Homo sapiens (Human).